Here is a 382-residue protein sequence, read N- to C-terminus: Serine protease 43 (382 aa).

A signal peptide spans 1 to 27 (MGGFCGADRGGFLALLVWLQLLQPLFS). Residues 30–97 (YKPREDSGVM…SGTTTKITLE (68 aa)) are disordered. Composition is skewed to polar residues over residues 56–68 (AQQS…SISH) and 85–95 (GSPSGTTTKIT). One can recognise a Peptidase S1 domain in the interval 119–355 (VDPGSLSAGR…YNEWVSYVLS (237 aa)). Cys144 and Cys160 are oxidised to a cystine. Residues His159 and Asp205 each act as charge relay system in the active site. Cystine bridges form between Cys239/Cys313, Cys272/Cys293, and Cys303/Cys331. Ser307 acts as the Charge relay system in catalysis. Residues 362–382 (PMGVLVLYLSLVFPLALLVAL) traverse the membrane as a helical segment.

The protein belongs to the peptidase S1 family. Testis-specific. Expressed in germ cells at the stages from late pachytene spermatocytes to spermatids.

The protein localises to the cell membrane. Functionally, plays a role in spermatogenesis. Involved in germ cell survival during meiosis. Lacks protease activity in vitro. The sequence is that of Serine protease 43 from Mus musculus (Mouse).